A 472-amino-acid polypeptide reads, in one-letter code: MKQDVILVLDCGATNVRAIAVDRQGKIVARASTANASDIAAENSAWHQWSLDAILQRFADCCRSLSSALSECVVRGITVTTFGVDGALVDAQGKLLYPVISWKCPRTAAVMETIERFISPRQLQTLSGVGAFSFNTLYKLVWLKENHPRLLEQAHCWLFISSLINHRLTGEFTTDITMAGTSQLLDIHQRDFSPEILQATGLARRLFPRIVEAGAPIGTLQTDAARLLGLPAGVPVISAEHDTQFALFGAGAQQGEPVLSSGTWEILMVRSGQVDTSLLSQYPGSTCELDSQSGLYNPGMQWLASGVLEWVRKLLWTPETPWQTLIDEARAIPAGAEGVRMQCDLLACQNAGWQGVTLNTTRGHFYRAALEGLTAQLQRNLRTLEKIGHFNATELLLVGGGSRNALWNQIKANQLDIPIKVLDDAETTVAGAAMFGWYGVGEFSSPEQARAQVNYQYRYFWPQTEPEIIEGV.

This sequence belongs to the FGGY kinase family. The cofactor is a divalent metal cation.

The catalysed reaction is L-fuculose + ATP = L-fuculose 1-phosphate + ADP + H(+). It participates in carbohydrate degradation; L-fucose degradation; L-lactaldehyde and glycerone phosphate from L-fucose: step 2/3. Its function is as follows. Catalyzes the phosphorylation of L-fuculose. The protein is L-fuculokinase of Salmonella typhi.